The primary structure comprises 300 residues: Fe(3+) dicitrate-binding periplasmic protein FecB (300 aa).

The N-terminal stretch at 1-21 (MLAFIRFLFAGLLLVISHAFA) is a signal peptide. Positions 39–295 (RIVVLELSFA…DTVKIFHHQP (257 aa)) constitute a Fe/B12 periplasmic-binding domain.

It belongs to the bacterial solute-binding protein 8 family. In terms of assembly, the complex is composed of two ATP-binding proteins (FecE), two transmembrane proteins (FecC and FecD) and a solute-binding protein (FecB). Interacts with FecC and FecD.

The protein localises to the periplasm. Its function is as follows. Part of the ABC transporter complex FecBCDE involved in citrate-dependent Fe(3+) uptake. Binds both iron-free and iron-loaded citrate although it binds iron-loaded citrate with a higher affinity. Binds different forms of Fe(3+)-citrate as well as citrate complexed with various representative Fe(3+)-mimics (Ga(3+), Al(3+), Sc(3+) and In(3+)) and a representative divalent metal ion (Mg(2+)). Can also bind various tricarboxylates in iron-free and iron-loaded form. This Escherichia coli (strain K12) protein is Fe(3+) dicitrate-binding periplasmic protein FecB.